The chain runs to 428 residues: MDIVILAAGCGSRMCSTTPKILHKLGNAPIIKHVLQLADELRPKRAVIVTNAAVNGPVAALAGEHNLRLNTVLQGEIAGTGGAATSALQALKNPSEEIVLILYGDTPLLDKATVCHALDRLSSGAKIVLVAFKSENNQYGRIVLGSSGNVLEVSHGRDTNGLAVSGAIAGYRQVISGLLGGLSCRDGELYLTDIVQSAAEKNVEVGYVIADERKAMGINTRADLAIAESYFQCMKRASFLQSGVTLTSPDQVFFSIDTQIAQDVIVHPYVVFGAGVAVEPGAEILSYSHLEFCHIKKGAIVGPFARVRGNSTIDRGCVVGNFVEIKESSLGEMSKVKHLSYLGNSTIGKNTNVGAGTVICNYDGRNKQHSDIGNNCFVGANSTIVSPIKVGDNAAIAAGSVITEDLPPRSLGIARSRQTTKPEYKTRR.

A pyrophosphorylase region spans residues 1-221; it reads MDIVILAAGC…ERKAMGINTR (221 aa). Residues 6–9, Lys-20, Gln-74, 79–80, 103–105, Gly-140, and Asn-219 contribute to the UDP-N-acetyl-alpha-D-glucosamine site; these read LAAG, GT, and YGD. Asp-105 provides a ligand contact to Mg(2+). A Mg(2+)-binding site is contributed by Asn-219. Positions 222 to 242 are linker; that stretch reads ADLAIAESYFQCMKRASFLQS. The segment at 243–428 is N-acetyltransferase; that stretch reads GVTLTSPDQV…TTKPEYKTRR (186 aa). Arg-308 and Lys-326 together coordinate UDP-N-acetyl-alpha-D-glucosamine. Catalysis depends on His-338, which acts as the Proton acceptor. Tyr-341 and Asn-352 together coordinate UDP-N-acetyl-alpha-D-glucosamine. Residues Ala-355, 361 to 362, Ala-398, and Arg-415 contribute to the acetyl-CoA site; that span reads NY.

In the N-terminal section; belongs to the N-acetylglucosamine-1-phosphate uridyltransferase family. It in the C-terminal section; belongs to the transferase hexapeptide repeat family. Homotrimer. Mg(2+) serves as cofactor.

It is found in the cytoplasm. The catalysed reaction is alpha-D-glucosamine 1-phosphate + acetyl-CoA = N-acetyl-alpha-D-glucosamine 1-phosphate + CoA + H(+). It catalyses the reaction N-acetyl-alpha-D-glucosamine 1-phosphate + UTP + H(+) = UDP-N-acetyl-alpha-D-glucosamine + diphosphate. It functions in the pathway nucleotide-sugar biosynthesis; UDP-N-acetyl-alpha-D-glucosamine biosynthesis; N-acetyl-alpha-D-glucosamine 1-phosphate from alpha-D-glucosamine 6-phosphate (route II): step 2/2. Its pathway is nucleotide-sugar biosynthesis; UDP-N-acetyl-alpha-D-glucosamine biosynthesis; UDP-N-acetyl-alpha-D-glucosamine from N-acetyl-alpha-D-glucosamine 1-phosphate: step 1/1. The protein operates within bacterial outer membrane biogenesis; LPS lipid A biosynthesis. Catalyzes the last two sequential reactions in the de novo biosynthetic pathway for UDP-N-acetylglucosamine (UDP-GlcNAc). The C-terminal domain catalyzes the transfer of acetyl group from acetyl coenzyme A to glucosamine-1-phosphate (GlcN-1-P) to produce N-acetylglucosamine-1-phosphate (GlcNAc-1-P), which is converted into UDP-GlcNAc by the transfer of uridine 5-monophosphate (from uridine 5-triphosphate), a reaction catalyzed by the N-terminal domain. In Anaplasma marginale (strain Florida), this protein is Bifunctional protein GlmU.